A 379-amino-acid polypeptide reads, in one-letter code: Queuine tRNA-ribosyltransferase (379 aa).

Asp94 functions as the Proton acceptor in the catalytic mechanism. Substrate contacts are provided by residues 94–98, Asp148, Gln191, and Gly218; that span reads DSGGF. Positions 249–255 are RNA binding; it reads GVGSPDA. Catalysis depends on Asp268, which acts as the Nucleophile. The segment at 273–277 is RNA binding; important for wobble base 34 recognition; sequence TRIAR. Positions 306, 308, 311, and 337 each coordinate Zn(2+).

This sequence belongs to the queuine tRNA-ribosyltransferase family. In terms of assembly, homodimer. Within each dimer, one monomer is responsible for RNA recognition and catalysis, while the other monomer binds to the replacement base PreQ1. Zn(2+) serves as cofactor.

It catalyses the reaction 7-aminomethyl-7-carbaguanine + guanosine(34) in tRNA = 7-aminomethyl-7-carbaguanosine(34) in tRNA + guanine. The protein operates within tRNA modification; tRNA-queuosine biosynthesis. In terms of biological role, catalyzes the base-exchange of a guanine (G) residue with the queuine precursor 7-aminomethyl-7-deazaguanine (PreQ1) at position 34 (anticodon wobble position) in tRNAs with GU(N) anticodons (tRNA-Asp, -Asn, -His and -Tyr). Catalysis occurs through a double-displacement mechanism. The nucleophile active site attacks the C1' of nucleotide 34 to detach the guanine base from the RNA, forming a covalent enzyme-RNA intermediate. The proton acceptor active site deprotonates the incoming PreQ1, allowing a nucleophilic attack on the C1' of the ribose to form the product. After dissociation, two additional enzymatic reactions on the tRNA convert PreQ1 to queuine (Q), resulting in the hypermodified nucleoside queuosine (7-(((4,5-cis-dihydroxy-2-cyclopenten-1-yl)amino)methyl)-7-deazaguanosine). This is Queuine tRNA-ribosyltransferase from Staphylococcus haemolyticus (strain JCSC1435).